The sequence spans 161 residues: Capsid protein (161 aa).

The protein belongs to the virgaviridae capsid protein family.

The protein resides in the virion. In terms of biological role, capsid protein self-assembles to form rod-shaped virions about 18 nm in diameter with a central canal enclosing the viral genomic RNA. This Tobamovirus Ob protein is Capsid protein (CP).